An 883-amino-acid chain; its full sequence is Glutamate receptor 2 (883 aa).

The signal sequence occupies residues 1–24 (MQKIMHISVLLSPVLWGLIFGVSS). The Extracellular portion of the chain corresponds to 25 to 543 (NSIQIGGLFP…GVFSFLDPLA (519 aa)). A disulfide bridge links Cys78 with Cys330. 4 N-linked (GlcNAc...) asparagine glycosylation sites follow: Asn256, Asn370, Asn406, and Asn413. L-glutamate-binding residues include Pro499, Thr501, and Arg506. The chain crosses the membrane as a helical span at residues 544 to 564 (YEIWMCIVFAYIGVSVVLFLV). The Cytoplasmic portion of the chain corresponds to 565–591 (SRFSPYEWHTEEFEDGRETQSSESTNE). Residues 592 to 607 (FGIFNSLWFSLGAFMQ) constitute an intramembrane region (helical; Pore-forming). An intramembrane segment occupies 608-610 (QGC). The S-palmitoyl cysteine moiety is linked to residue Cys610. Topologically, residues 611–616 (DISPRS) are cytoplasmic. Residues 617–637 (LSGRIVGGVWWFFTLIIISSY) form a helical membrane-spanning segment. Residues 638–812 (TANLAAFLTV…EKTSALSLSN (175 aa)) are Extracellular-facing. 2 residues coordinate L-glutamate: Ser675 and Thr676. Ser683 is subject to Phosphoserine; by PKC. A Phosphoserine; by PKG modification is found at Ser717. Residue Glu726 coordinates L-glutamate. A disulfide bridge links Cys739 with Cys794. A helical transmembrane segment spans residues 813–833 (VAGVFYILVGGLGLAMLVALI). The Cytoplasmic segment spans residues 834-883 (EFCYKSRAEAKRMKVAKNAQNINPSSSQNSQNFATYKEGYNVYGIESVKI). Residue Cys836 is the site of S-palmitoyl cysteine attachment. Residues Ser860 and Ser863 each carry the phosphoserine modification. The interval 867–877 (ATYKEGYNVYG) is required for interaction with IQSEC1. Tyr876 bears the Phosphotyrosine mark. Ser880 carries the phosphoserine modification.

Belongs to the glutamate-gated ion channel (TC 1.A.10.1) family. GRIA2 subfamily. In terms of assembly, homotetramer or heterotetramer of pore-forming glutamate receptor subunits. Tetramers may be formed by the dimerization of dimers. May interact with MPP4. Forms a ternary complex with GRIP1 and CSPG4. Interacts with ATAD1 in an ATP-dependent manner. ATAD1-catalyzed ATP hydrolysis disrupts binding to ATAD1 and to GRIP1 and leads to AMPAR complex disassembly. Interacts with GRIP1 and GRIP2. Interacts with NSF via its C-terminus. Isoform 1, but not isoform 3, interacts with PICK1. Interacts with CACNG2. Interacts with GRIA1 and SYNDIG1. Part of a complex containing GRIA2, NSF and NAPA and/or NAPB. Interacts with SNX27 (via PDZ domain); the interaction is required for recycling to the plasma membrane when endocytosed and prevent degradation in lysosomes. Interacts with LRFN1. Found in a complex with GRIA1, GRIA3, GRIA4, CNIH2, CNIH3, CACNG2, CACNG3, CACNG4, CACNG5, CACNG7 and CACNG8. Interacts with CACNG5. Interacts with OLFM2. Interacts with AP4B1, AP4E1 and AP4M1; probably indirect it mediates the somatodendritic localization of GRIA2 in neurons. Forms a complex with GRIP1, NSG1 and STX12; controls the intracellular fate of AMPAR and the endosomal sorting of the GRIA2 subunit toward recycling and membrane targeting. Interacts with IQSEC1; the interaction is required for ARF6 activation. Interacts (heterotetramer form) with CNIH2 and CNIH3; this interaction promotes expression at the plasma membrane and extensively modulates their gating properties by slowing deactivation and desensitization kinetics. In terms of processing, palmitoylated. Depalmitoylated upon L-glutamate stimulation. ZDHHC3/GODZ specifically palmitoylates Cys-610, which leads to Golgi retention and decreased cell surface expression. In contrast, Cys-836 palmitoylation does not affect cell surface expression but regulates stimulation-dependent endocytosis. N-glycosylated. Post-translationally, ubiquitinated by RNF167, leading to its degradation. In terms of processing, phosphorylation at Tyr-876 is required for interaction with IQSEC1 and ARF6 activation, which in turn triggers AMPAR internalization for persistent synaptic depression. Detected in brain cortex, hippocampus and cerebellum (at protein level). Detected in hippocampus.

It localises to the cell membrane. The protein resides in the postsynaptic cell membrane. The protein localises to the postsynaptic density membrane. It carries out the reaction Ca(2+)(in) = Ca(2+)(out). The enzyme catalyses Na(+)(in) = Na(+)(out). In terms of biological role, ionotropic glutamate receptor that functions as a ligand-gated cation channel, gated by L-glutamate and glutamatergic agonists such as alpha-amino-3-hydroxy-5-methyl-4-isoxazolepropionic acid (AMPA), quisqualic acid, and kainic acid. L-glutamate acts as an excitatory neurotransmitter at many synapses in the central nervous system and plays an important role in fast excitatory synaptic transmission. Binding of the excitatory neurotransmitter L-glutamate induces a conformation change, leading to the opening of the cation channel, and thereby converts the chemical signal to an electrical impulse upon entry of monovalent and divalent cations such as sodium and calcium. The receptor then desensitizes rapidly and enters in a transient inactive state, characterized by the presence of bound agonist. In the presence of CACNG4 or CACNG7 or CACNG8, shows resensitization which is characterized by a delayed accumulation of current flux upon continued application of L-glutamate. Through complex formation with NSG1, GRIP1 and STX12 controls the intracellular fate of AMPAR and the endosomal sorting of the GRIA2 subunit toward recycling and membrane targeting. The polypeptide is Glutamate receptor 2 (Mus musculus (Mouse)).